The sequence spans 84 residues: UPF0248 protein Pisl_1919 (84 aa).

This sequence belongs to the UPF0248 family.

The protein is UPF0248 protein Pisl_1919 of Pyrobaculum islandicum (strain DSM 4184 / JCM 9189 / GEO3).